A 151-amino-acid polypeptide reads, in one-letter code: Large ribosomal subunit protein eL19 (151 aa).

The disordered stretch occupies residues 62-93 (RLKERRKKRSLKSEGKKSGSRKGKKGARANSK). Basic residues predominate over residues 79-88 (SGSRKGKKGA).

The protein belongs to the eukaryotic ribosomal protein eL19 family. As to quaternary structure, part of the 50S ribosomal subunit.

Functionally, binds to the 23S rRNA. The chain is Large ribosomal subunit protein eL19 from Saccharolobus solfataricus (strain ATCC 35092 / DSM 1617 / JCM 11322 / P2) (Sulfolobus solfataricus).